The following is a 186-amino-acid chain: LSM12 homolog B (186 aa).

The region spanning 1–74 (MSSLAPCFTV…CMDIEIVKEA (74 aa)) is the Sm domain. The region spanning 84-186 (EPIDLPMIRE…VVQNFCSKQF (103 aa)) is the AD domain.

This sequence belongs to the LSM12 family. In terms of assembly, interacts with Sbat; along with Sbat and Vlet, may form an accessory subcomplex involved in SMN complex function.

Functionally, may have an accessory function in the survival motor neuron (SMN) complex. The chain is LSM12 homolog B from Drosophila melanogaster (Fruit fly).